The chain runs to 430 residues: Putative FBD-associated F-box protein At5g56440 (430 aa).

The region spanning 1-49 (MDRISLLPDDVVFKILSFVPTKVVVSTNLLSKRWRYLWKHVPKLDYRDP) is the F-box domain. The region spanning 349-399 (QWEQPSSVPKCLISSLETVEWIDYKGREVEKKVVMYLLENSRQLKTMAIRS) is the FBD domain.

The chain is Putative FBD-associated F-box protein At5g56440 from Arabidopsis thaliana (Mouse-ear cress).